Consider the following 430-residue polypeptide: Serine--tRNA ligase (430 aa).

An L-serine-binding site is contributed by 237 to 239 (TAE). An ATP-binding site is contributed by 268–270 (RSE). Position 291 (Glu-291) interacts with L-serine. 355 to 358 (EISS) is a binding site for ATP. Ser-391 contacts L-serine.

The protein belongs to the class-II aminoacyl-tRNA synthetase family. Type-1 seryl-tRNA synthetase subfamily. In terms of assembly, homodimer. The tRNA molecule binds across the dimer.

It is found in the cytoplasm. It carries out the reaction tRNA(Ser) + L-serine + ATP = L-seryl-tRNA(Ser) + AMP + diphosphate + H(+). The catalysed reaction is tRNA(Sec) + L-serine + ATP = L-seryl-tRNA(Sec) + AMP + diphosphate + H(+). The protein operates within aminoacyl-tRNA biosynthesis; selenocysteinyl-tRNA(Sec) biosynthesis; L-seryl-tRNA(Sec) from L-serine and tRNA(Sec): step 1/1. Functionally, catalyzes the attachment of serine to tRNA(Ser). Is also able to aminoacylate tRNA(Sec) with serine, to form the misacylated tRNA L-seryl-tRNA(Sec), which will be further converted into selenocysteinyl-tRNA(Sec). This is Serine--tRNA ligase from Salmonella enteritidis PT4 (strain P125109).